We begin with the raw amino-acid sequence, 306 residues long: Oxygen-dependent coproporphyrinogen-III oxidase (306 aa).

Residue serine 93 participates in substrate binding. The a divalent metal cation site is built by histidine 97 and histidine 107. The Proton donor role is filled by histidine 107. A substrate-binding site is contributed by 109 to 111 (NVR). Residues histidine 146 and histidine 176 each coordinate a divalent metal cation. The tract at residues 241–276 (YVEYNLVYDRGTLFGLQSGGRTESILMSLPPQVAWG) is important for dimerization. Substrate is bound at residue 259 to 261 (GGR).

This sequence belongs to the aerobic coproporphyrinogen-III oxidase family. Homodimer. A divalent metal cation is required as a cofactor.

Its subcellular location is the cytoplasm. The catalysed reaction is coproporphyrinogen III + O2 + 2 H(+) = protoporphyrinogen IX + 2 CO2 + 2 H2O. It participates in porphyrin-containing compound metabolism; protoporphyrin-IX biosynthesis; protoporphyrinogen-IX from coproporphyrinogen-III (O2 route): step 1/1. In terms of biological role, involved in the heme biosynthesis. Catalyzes the aerobic oxidative decarboxylation of propionate groups of rings A and B of coproporphyrinogen-III to yield the vinyl groups in protoporphyrinogen-IX. The polypeptide is Oxygen-dependent coproporphyrinogen-III oxidase (Stutzerimonas stutzeri (strain A1501) (Pseudomonas stutzeri)).